The chain runs to 378 residues: MAARAPVHLRGFIARVALNKKNLHARHKLDTDIDKYYYTLHNVIIPDFMDMVKEIPGYPERIKKCVAHTTPSYFEGWAFSTELIYKTVADKQHQTERNLEKCRIIRALMDMSYAMAGILDDYVDKGEFRRGKKVWASVCEGGQEAAIYDSIAVTYLMSLMVKRHFGTDPGYSKLIELFNMVPGTAAIGNTLDILDRHDTNYYDDTMWKHSVQNKAANTVFPAATAGLIHAGVLCDDLLDRTSEVFGYTGHLFQVWDDFMEHYAVKEQSGKGAPDTKYNAKTWATLTAMAHFNEAQAKEFKACYGSTDPAKRSRVRELYDEVNLRGLYIDYLRNTYMVVEEKISKIPDPRIQSACRSYMDWLLVEPPQDEEEAESVLNN.

Residues Asp-120 and Asp-124 each contribute to the Mg(2+) site. The DDXXD motif signature appears at 120–124 (DDYVD).

It belongs to the terpene synthase family. Requires Mg(2+) as cofactor. Highly expressed in male epidermal tissue associated with the cuticle of ventral sternites.

The catalysed reaction is (2Z,6E)-farnesyl diphosphate = (Z)-alpha-bisabolene + diphosphate. Its pathway is pheromone biosynthesis. Sesquiterpene alcohol synthase that catalyzes the formation of the pheromone precursor (Z)-alpha-bisabolene from (2Z,6E)-farnesyl diphosphate. The chain is IDS-type sesquiterpene synthase from Nezara viridula (Southern green stink bug).